We begin with the raw amino-acid sequence, 325 residues long: Probable cell division protein WhiA (325 aa).

A DNA-binding region (H-T-H motif) is located at residues 273 to 306; sequence SLEELGALADPPLTKDAVAGRIRRLLALADKRAN.

It belongs to the WhiA family.

Involved in cell division and chromosome segregation. In Frankia alni (strain DSM 45986 / CECT 9034 / ACN14a), this protein is Probable cell division protein WhiA.